Reading from the N-terminus, the 506-residue chain is Galactose/methyl galactoside import ATP-binding protein MglA (506 aa).

2 ABC transporter domains span residues Leu-14 to Glu-249 and Thr-260 to Leu-506. Gly-46–Ser-53 lines the ATP pocket.

Belongs to the ABC transporter superfamily. Galactose/methyl galactoside importer (TC 3.A.1.2.3) family. As to quaternary structure, the complex is composed of one ATP-binding protein (MglA), two transmembrane proteins (MglC) and a solute-binding protein (MglB).

It localises to the cell inner membrane. The enzyme catalyses D-galactose(out) + ATP + H2O = D-galactose(in) + ADP + phosphate + H(+). The catalysed reaction is methyl beta-D-galactoside(out) + ATP + H2O = methyl beta-D-galactoside(in) + ADP + phosphate + H(+). Functionally, part of the ABC transporter complex MglABC involved in galactose/methyl galactoside import. Responsible for energy coupling to the transport system. The sequence is that of Galactose/methyl galactoside import ATP-binding protein MglA from Pasteurella multocida (strain Pm70).